A 410-amino-acid polypeptide reads, in one-letter code: Lissencephaly-1 homolog B (410 aa).

Positions 7-39 (QRDELNRAIADYLRSNGYEEAYSTFKKEAELDM) constitute a LisH domain. Residues 56 to 82 (TSVIRLQKKVMELESKLNEAKEEITLG) adopt a coiled-coil conformation. WD repeat units lie at residues 106 to 147 (GHRS…RTLK), 148 to 187 (GHTD…CIRT), 190 to 229 (GHDH…CVKT), 232 to 271 (GHRE…CKAE), 274 to 333 (EHEH…CLMT), 336 to 375 (GHDN…CMKT), and 378 to 410 (AHEH…WECR).

Belongs to the WD repeat LIS1/nudF family. In terms of assembly, can self-associate. Component of the cytosolic PAF-AH (I) heterotetrameric enzyme, which is composed of PAFAH1B1 (beta), PAFAH1B2 (alpha2) and PAFAH1B3 (alpha1) subunits. The catalytic activity of the enzyme resides in the alpha1 (PAFAH1B3) and alpha2 (PAFAH1B2) subunits, whereas the beta subunit (PAFAH1B1) has regulatory activity. Trimer formation is not essential for the catalytic activity. Interacts with dynein, dynactin, nde1 and ndel1.

The protein localises to the cytoplasm. The protein resides in the cytoskeleton. It is found in the microtubule organizing center. Its subcellular location is the centrosome. Regulatory subunit (beta subunit) of the cytosolic type I platelet-activating factor (PAF) acetylhydrolase (PAF-AH (I)), an enzyme that catalyzes the hydrolyze of the acetyl group at the sn-2 position of PAF and its analogs and participates in PAF inactivation. Regulates the PAF-AH (I) activity in a catalytic dimer composition-dependent manner. Positively regulates the activity of the minus-end directed microtubule motor protein dynein. May enhance dynein-mediated microtubule sliding by targeting dynein to the microtubule plus end. Required for several dynein- and microtubule-dependent processes such as the maintenance of Golgi integrity, the peripheral transport of microtubule fragments and the coupling of the nucleus and centrosome. May be required for proliferation of neuronal precursors and neuronal migration. In Salmo salar (Atlantic salmon), this protein is Lissencephaly-1 homolog B (pafah1b1-2).